We begin with the raw amino-acid sequence, 363 residues long: DNA replication and repair protein RecF (363 aa).

30–37 lines the ATP pocket; it reads GDNAQGKT.

It belongs to the RecF family.

Its subcellular location is the cytoplasm. Its function is as follows. The RecF protein is involved in DNA metabolism; it is required for DNA replication and normal SOS inducibility. RecF binds preferentially to single-stranded, linear DNA. It also seems to bind ATP. This chain is DNA replication and repair protein RecF, found in Syntrophotalea carbinolica (strain DSM 2380 / NBRC 103641 / GraBd1) (Pelobacter carbinolicus).